Here is a 486-residue protein sequence, read N- to C-terminus: Glutamyl-tRNA(Gln) amidotransferase subunit A (486 aa).

Active-site charge relay system residues include lysine 79 and serine 154. The Acyl-ester intermediate role is filled by serine 178.

It belongs to the amidase family. GatA subfamily. In terms of assembly, heterotrimer of A, B and C subunits.

It carries out the reaction L-glutamyl-tRNA(Gln) + L-glutamine + ATP + H2O = L-glutaminyl-tRNA(Gln) + L-glutamate + ADP + phosphate + H(+). Its function is as follows. Allows the formation of correctly charged Gln-tRNA(Gln) through the transamidation of misacylated Glu-tRNA(Gln) in organisms which lack glutaminyl-tRNA synthetase. The reaction takes place in the presence of glutamine and ATP through an activated gamma-phospho-Glu-tRNA(Gln). This Myxococcus xanthus (strain DK1622) protein is Glutamyl-tRNA(Gln) amidotransferase subunit A.